Consider the following 378-residue polypeptide: MDLGKPMKSVLVVALLVIFQVCLCQDEVTDDYIGDNTTVDYTLFESLCSKKDVRNFKAWFLPIMYSIICFVGLLGNGLVVLTYIYFKRLKTMTDTYLLNLAVADILFLLTLPFWAYSAAKSWVFGVHFCKLIFAIYKMSFFSGMLLLLCISIDRYVAIVQAVSAHRHRARVLLISKLSCVGIWILATVLSIPELLYSDLQRSSSEQAMRCSLITEHVEAFITIQVAQMVIGFLVPLLAMSFCYLVIIRTLLQARNFERNKAIKVIIAVVVVFIVFQLPYNGVVLAQTVANFNITSSTCELSKQLNIAYDVTYSLACVRCCVNPFLYAFIGVKFRNDLFKLFKDLGCLSQEQLRQWSSCRHIRRSSMSVEAETTTTFSP.

The first 24 residues, 1–24 (MDLGKPMKSVLVVALLVIFQVCLC), serve as a signal peptide directing secretion. The Extracellular segment spans residues 25–59 (QDEVTDDYIGDNTTVDYTLFESLCSKKDVRNFKAW). Asn36 is a glycosylation site (N-linked (GlcNAc...) asparagine). A helical transmembrane segment spans residues 60 to 86 (FLPIMYSIICFVGLLGNGLVVLTYIYF). Over 87–95 (KRLKTMTDT) the chain is Cytoplasmic. Residues 96 to 116 (YLLNLAVADILFLLTLPFWAY) traverse the membrane as a helical segment. The Extracellular segment spans residues 117-130 (SAAKSWVFGVHFCK). Cysteines 129 and 210 form a disulfide. Residues 131 to 152 (LIFAIYKMSFFSGMLLLLCISI) form a helical membrane-spanning segment. The Cytoplasmic portion of the chain corresponds to 153–170 (DRYVAIVQAVSAHRHRAR). A helical membrane pass occupies residues 171–191 (VLLISKLSCVGIWILATVLSI). At 192–219 (PELLYSDLQRSSSEQAMRCSLITEHVEA) the chain is on the extracellular side. A helical membrane pass occupies residues 220-247 (FITIQVAQMVIGFLVPLLAMSFCYLVII). Residues 248–263 (RTLLQARNFERNKAIK) lie on the Cytoplasmic side of the membrane. The chain crosses the membrane as a helical span at residues 264–289 (VIIAVVVVFIVFQLPYNGVVLAQTVA). The Extracellular segment spans residues 290–313 (NFNITSSTCELSKQLNIAYDVTYS). Residues 314–331 (LACVRCCVNPFLYAFIGV) form a helical membrane-spanning segment. Topologically, residues 332-378 (KFRNDLFKLFKDLGCLSQEQLRQWSSCRHIRRSSMSVEAETTTTFSP) are cytoplasmic.

It belongs to the G-protein coupled receptor 1 family. As to expression, expressed in various lymphoid tissues and activated B- and T-lymphocytes, strongly up-regulated in B-cells infected with Epstein-Barr virus and T-cells infected with herpesvirus 6 or 7.

Its subcellular location is the cell membrane. Receptor for the MIP-3-beta chemokine. Probable mediator of EBV effects on B-lymphocytes or of normal lymphocyte functions. The sequence is that of C-C chemokine receptor type 7 (CCR7) from Homo sapiens (Human).